The sequence spans 301 residues: Transcriptional activator protein NhaR (301 aa).

The HTH lysR-type domain occupies 6–63 (INYNHLYYFWHVYKEGSVVGAAEALYLTPQTITGQIRALEERLQGKLFKRKGRGLEPS). The H-T-H motif DNA-binding region spans 23 to 42 (VVGAAEALYLTPQTITGQIR).

The protein belongs to the LysR transcriptional regulatory family.

It is found in the cytoplasm. Functionally, plays a role in the positive regulation of NhaA. The chain is Transcriptional activator protein NhaR (nhaR) from Escherichia coli (strain K12).